Reading from the N-terminus, the 275-residue chain is Probable histone chaperone asf-1 (275 aa).

3 stretches are compositionally biased toward acidic residues: residues 157 to 166 (EDPVAEPVED), 183 to 207 (DGQE…EVDL), and 230 to 247 (KMED…DDEP). Residues 157 to 275 (EDPVAEPVED…SDKTNNEMVQ (119 aa)) are disordered. The span at 265-275 (LSDKTNNEMVQ) shows a compositional bias: basic and acidic residues.

It belongs to the ASF1 family. In terms of assembly, interacts with histone H3 and histone H4.

It is found in the nucleus. Its function is as follows. Histone chaperone that facilitates histone deposition and histone exchange and removal during nucleosome assembly and disassembly. The protein is Probable histone chaperone asf-1 of Caenorhabditis elegans.